The sequence spans 445 residues: Tubulin beta-4B chain (445 aa).

The short motif at 1–4 is the MREI motif element; it reads MREI. Glutamine 11 lines the GTP pocket. The residue at position 55 (threonine 55) is a Phosphothreonine. Lysine 58 is modified (N6-acetyllysine). The GTP site is built by glutamate 69, serine 138, glycine 142, threonine 143, and glycine 144. Mg(2+) is bound at residue glutamate 69. Residue serine 172 is modified to Phosphoserine; by CDK1. GTP contacts are provided by asparagine 204 and asparagine 226. The segment at 426–445 is disordered; that stretch reads QDATAEEEGEFEEEAEEEVA. A compositionally biased stretch (acidic residues) spans 429-445; sequence TAEEEGEFEEEAEEEVA. 5-glutamyl polyglutamate is present on glutamate 438.

Belongs to the tubulin family. In terms of assembly, dimer of alpha and beta chains. A typical microtubule is a hollow water-filled tube with an outer diameter of 25 nm and an inner diameter of 15 nM. Alpha-beta heterodimers associate head-to-tail to form protofilaments running lengthwise along the microtubule wall with the beta-tubulin subunit facing the microtubule plus end conferring a structural polarity. Microtubules usually have 13 protofilaments but different protofilament numbers can be found in some organisms and specialized cells. Component of sperm flagellar doublet microtubules. Mg(2+) is required as a cofactor. Post-translationally, some glutamate residues at the C-terminus are polyglycylated, resulting in polyglycine chains on the gamma-carboxyl group. Glycylation is mainly limited to tubulin incorporated into axonemes (cilia and flagella) whereas glutamylation is prevalent in neuronal cells, centrioles, axonemes, and the mitotic spindle. Both modifications can coexist on the same protein on adjacent residues, and lowering polyglycylation levels increases polyglutamylation, and reciprocally. Cilia and flagella glycylation is required for their stability and maintenance. Flagella glycylation controls sperm motility. Some glutamate residues at the C-terminus are polyglutamylated, resulting in polyglutamate chains on the gamma-carboxyl group. Polyglutamylation plays a key role in microtubule severing by spastin (SPAST). SPAST preferentially recognizes and acts on microtubules decorated with short polyglutamate tails: severing activity by SPAST increases as the number of glutamates per tubulin rises from one to eight, but decreases beyond this glutamylation threshold. Glutamylation is also involved in cilia motility. In terms of processing, phosphorylated on Ser-172 by CDK1 during the cell cycle, from metaphase to telophase, but not in interphase. This phosphorylation inhibits tubulin incorporation into microtubules.

It localises to the cytoplasm. The protein localises to the cytoskeleton. Its subcellular location is the flagellum axoneme. Its function is as follows. Tubulin is the major constituent of microtubules, a cylinder consisting of laterally associated linear protofilaments composed of alpha- and beta-tubulin heterodimers. Microtubules grow by the addition of GTP-tubulin dimers to the microtubule end, where a stabilizing cap forms. Below the cap, tubulin dimers are in GDP-bound state, owing to GTPase activity of alpha-tubulin. The protein is Tubulin beta-4B chain (Tubb4b) of Rattus norvegicus (Rat).